Here is a 1170-residue protein sequence, read N- to C-terminus: MALTRYQIRNEYGLADKELYQSADKEDPEALLEAASMAGLVGVLRQLGDLSEFAAEVFHCLHEQLMTTAARGHGLAMRLQHLEADFPSVEIPILSQTDHSTFFYEPGLEWHSDLQTKEDLISPRNLPRCIMDSYEECHGPPQLFLLDKFDVAGSGSCLKRYSDPSLLKTHTTSAVVATSKLGKDKRLRQSKKKGSHTTIKETPEDSRTSHAKLHQLFFLEHVENGHRNPEFHVKLKRRQLNGPPINSSSGASYMEKFLKNSSPYCERVHGTMDQSSPAMETEVTVCSEQEDLPIPSLVYSNSGGTRKYNEMEIESIAGHEILEIPFVPHEITVNEKSPVVCLESSSSVNLCCKTNNDADSPASTESEVKEAGSDDKAGCDHGFPGFGQPQICTNAEVNQTEVLTQFSNVLRHSPEEGESSLLCTDIQRASPESKPHKAEEAAVDLDESFSQMTPDIDSAGMGTLEILQTPFSLSCYESPANLPEDSGSHLELQSNKANAEACEVFEVRRDPMLNISPETHLLKVTQVPQDAYEGGTNDVHSQHVFSVETASEISVSALVEDQFSSITNQEIEALESEDISSEAGHFIPDTKKSLNETSVALESDFLLPNHYISTFDNFEDLSLSADAQDYAAPKEDETNSQDGSSMNPAQSKHISTSEISSENGTLMSDTPRDLHTGYGSLSASSCLEDGLANPDLAEISSYSGQEDPQTMSIVSDDSSDPEVPIPDGTCFAGDVDHDNQTGLNNKAIETVPQKELETISDPQESLLGTEECLSSEYCLQIQNQRQESPSETGSANSRTSSDESPPTQNGSVGVQSSPLDVFPSSITEIEALHAPYQEIFTSLNDHISESVLSKGLTDEEDFLNVSPESILPLSTSLHETPQANPEITPPLPPLPPTQWWMGKLVESTEMPSLAGSGNNSFNIQRDENTQNGSVQANEAQYPSEVSVTDGENHNFHIYTEESKATEEQSPSGVNGTSDTYMESKHKCLNRTPEDSFSLAESAQGLEADWRTEAMALEWFSQNLREHNNPHPAKLEEEEPQVDHPLEKPGQTKFRQTLRDNNSYNQNQKAGKLKRDEDTLVIGIDRSMLRKVSEGNRTHVGARVDENDSLLEIIRSKSFNLRPADASGRPNFQVAVPKTNLKVAAILEKANTLRQAMAGSDDEHDSDSWSE.

Disordered regions lie at residues 180 to 207 (KLGKDKRLRQSKKKGSHTTIKETPEDSR), 356 to 376 (NDADSPASTESEVKEAGSDDK), 631 to 674 (AAPK…PRDL), 701 to 742 (SYSG…NQTG), 783 to 819 (NQRQESPSETGSANSRTSSDESPPTQNGSVGVQSSPL), 960 to 980 (EESKATEEQSPSGVNGTSDTY), and 1026 to 1046 (HNNPHPAKLEEEEPQVDHPLE). Basic residues predominate over residues 183-195 (KDKRLRQSKKKGS). A compositionally biased stretch (basic and acidic residues) spans 198–207 (TIKETPEDSR). A compositionally biased stretch (polar residues) spans 356–365 (NDADSPASTE). Positions 366–376 (SEVKEAGSDDK) are enriched in basic and acidic residues. Polar residues-rich tracts occupy residues 640–668 (SQDGSSMNPAQSKHISTSEISSENGTLMS), 701–716 (SYSGQEDPQTMSIVSD), 783–818 (NQRQESPSETGSANSRTSSDESPPTQNGSVGVQSSP), and 967–980 (EQSPSGVNGTSDTY). Residues 1105-1123 (ENDSLLEIIRSKSFNLRPA) enclose the WH2 domain.

Belongs to the SCAR/WAVE family. As to quaternary structure, interacts with SPK1. As to expression, expressed in expanding cotyledons, expanding leaves and expanding siliques containing developing embryos. Detected in unopened flower buds and in the expanding tip region of roots. Reduced expression in mature leaves.

The protein resides in the cytoplasm. It is found in the cytoskeleton. Its function is as follows. Involved in regulation of actin and microtubule organization. Part of a WAVE complex that activates the Arp2/3 complex. Regulates trichome branch positioning and expansion. This chain is Protein SCAR4 (SCAR4), found in Arabidopsis thaliana (Mouse-ear cress).